A 119-amino-acid chain; its full sequence is Ghilanten (119 aa).

Gln1 carries the post-translational modification Pyrrolidone carboxylic acid. 10 disulfide bridges follow: Cys8–Cys19, Cys13–Cys26, Cys28–Cys48, Cys33–Cys51, Cys37–Cys53, Cys62–Cys73, Cys67–Cys80, Cys82–Cys103, Cys88–Cys106, and Cys92–Cys108. The region spanning Cys28 to Cys53 is the Antistasin-like 1 domain. The Antistasin-like 2 domain occupies Lys83–Cys108. Residues Lys97–Lys100 and Lys111–Leu118 contribute to the heparin site.

Belongs to the protease inhibitor I15 (antistasin) family.

Its subcellular location is the secreted. Its function is as follows. This highly disulfide-bonded protein is a potent inhibitor of factor Xa. May have therapeutic utility as an anticoagulant. Also exhibits a strong metastatic activity. This is Ghilanten from Haementeria ghilianii (Amazon leech).